A 66-amino-acid polypeptide reads, in one-letter code: MGMRMMFTVFLLVVLAATIVSFTSDRASDGRNVAAKAFHRIGRTIRDECCSNPACRVNNPHVCRRR.

A signal peptide spans 1–21 (MGMRMMFTVFLLVVLAATIVS). Positions 22 to 44 (FTSDRASDGRNVAAKAFHRIGRT) are excised as a propeptide. Residues 45–48 (IRDE) are N-terminal tail important for activity on alpha-3-beta-2/CHRNA3-CHRNB2 and alpha-4-beta-2/CHRNA4-CHRNB2 nAChR. Glu48 carries the 4-carboxyglutamate modification. 2 disulfides stabilise this stretch: Cys49-Cys55 and Cys50-Cys63. Residues 51-53 (SNP) are ser-Xaa-Pro motif, crucial for potent interaction with nAChR. Position 60 is a 4-hydroxyproline (Pro60).

It belongs to the conotoxin A superfamily. In terms of processing, gamma-carboxyglutamation of Glu-48 seems to be not important for nAChR inhibition, since synthetic peptides without this modification do not show change in inhibition of alpha-7/CHRNA7 and alpha-3-beta-2/CHRNA3-CHRNB2 nAChR and show a 2.3-fold increase in inhibition of alpha-4-beta-2/CHRNA4-CHRNB2 nAChR. Hydroxylation of Pro-60 seems to be important for nAChR inhibition, since synthetic peptides without this modification show a small decrease in inhibition of alpha-7/CHRNA7 and alpha-3-beta-2/CHRNA3-CHRNB2 nAChR and a very important decrease in inhibition of alpha-4-beta-2/CHRNA4-CHRNB2 nAChR. Post-translationally, an amidation of Cys-63 increases potency against alpha-7/CHRNA7 (2.6-fold) and alpha-3-beta-2/CHRNA3-CHRNB2 (2-fold) nAChR. On the other hand, the peptide has no more activity on alpha-4-beta-2/CHRNA4-CHRNB2 nAChR with an amidated Cys-63. In terms of tissue distribution, expressed by the venom duct.

The protein localises to the secreted. In terms of biological role, alpha-conotoxins act on postsynaptic membranes, they bind to the nicotinic acetylcholine receptors (nAChR) and thus inhibit them. This toxin reversibly blocks alpha-3-beta-2/CHRNA3-CHRNB2 (IC(50)=3.1-5.1 nM), alpha-7/CHRNA7 (IC(50)=4.5-5.1 nM), and alpha-4-beta-2/CHRNA4-CHRNB2 (IC(50)=128.6-390 nM) nAChRs. The sequence is that of Alpha-conotoxin GID from Conus geographus (Geography cone).